Reading from the N-terminus, the 309-residue chain is tRNA uridine(34) hydroxylase (309 aa).

Residues 130 to 224 enclose the Rhodanese domain; sequence SDPDTIVIDT…YLEEVPQEES (95 aa). C184 functions as the Cysteine persulfide intermediate in the catalytic mechanism.

The protein belongs to the TrhO family.

The catalysed reaction is uridine(34) in tRNA + AH2 + O2 = 5-hydroxyuridine(34) in tRNA + A + H2O. Catalyzes oxygen-dependent 5-hydroxyuridine (ho5U) modification at position 34 in tRNAs. The sequence is that of tRNA uridine(34) hydroxylase from Rhizobium etli (strain ATCC 51251 / DSM 11541 / JCM 21823 / NBRC 15573 / CFN 42).